The following is a 574-amino-acid chain: 3-hydroxy-3-methylglutaryl-coenzyme A reductase 3 (574 aa).

The segment at methionine 1–serine 30 is disordered. The chain crosses the membrane as a helical span at residues proline 41–leucine 61. An N-linked (GlcNAc...) asparagine glycan is attached at asparagine 78. A helical membrane pass occupies residues valine 83–phenylalanine 103. The tract at residues valine 104–glutamate 161 is linker. A glycan (N-linked (GlcNAc...) asparagine) is linked at asparagine 113. A catalytic region spans residues aspartate 162–lysine 574. Catalysis depends on glutamate 256, which acts as the Charge relay system. An N-linked (GlcNAc...) asparagine glycan is attached at asparagine 320. Catalysis depends on lysine 388, which acts as the Charge relay system. Asparagine 433 carries N-linked (GlcNAc...) asparagine glycosylation. The active-site Charge relay system is aspartate 464. The active-site Proton donor is the histidine 562. A glycan (N-linked (GlcNAc...) asparagine) is linked at asparagine 566.

This sequence belongs to the HMG-CoA reductase family. In terms of tissue distribution, expressed in mature petals and anthers.

It localises to the endoplasmic reticulum membrane. The catalysed reaction is (R)-mevalonate + 2 NADP(+) + CoA = (3S)-3-hydroxy-3-methylglutaryl-CoA + 2 NADPH + 2 H(+). It participates in metabolic intermediate biosynthesis; (R)-mevalonate biosynthesis; (R)-mevalonate from acetyl-CoA: step 3/3. In terms of biological role, catalyzes the synthesis of mevalonate. The specific precursor of all isoprenoid compounds present in plants. The protein is 3-hydroxy-3-methylglutaryl-coenzyme A reductase 3 (HMG3) of Solanum tuberosum (Potato).